A 178-amino-acid polypeptide reads, in one-letter code: Cytidylate kinase (178 aa).

Residue 7–15 (GLPGTGTTT) participates in ATP binding.

It belongs to the cytidylate kinase family. Type 2 subfamily.

Its subcellular location is the cytoplasm. It catalyses the reaction CMP + ATP = CDP + ADP. The enzyme catalyses dCMP + ATP = dCDP + ADP. This Methanocaldococcus jannaschii (strain ATCC 43067 / DSM 2661 / JAL-1 / JCM 10045 / NBRC 100440) (Methanococcus jannaschii) protein is Cytidylate kinase (cmk).